Reading from the N-terminus, the 163-residue chain is Deoxyuridine 5'-triphosphate nucleotidohydrolase (163 aa).

Residues 78-80 (RSG), N91, and 95-97 (TVD) each bind substrate. The span at 140 to 151 (ERESLNETERGD) shows a compositional bias: basic and acidic residues. A disordered region spans residues 140–163 (ERESLNETERGDGGFGHTGVNSQP).

The protein belongs to the dUTPase family. Mg(2+) serves as cofactor.

It catalyses the reaction dUTP + H2O = dUMP + diphosphate + H(+). The protein operates within pyrimidine metabolism; dUMP biosynthesis; dUMP from dCTP (dUTP route): step 2/2. Its function is as follows. This enzyme is involved in nucleotide metabolism: it produces dUMP, the immediate precursor of thymidine nucleotides and it decreases the intracellular concentration of dUTP so that uracil cannot be incorporated into DNA. The protein is Deoxyuridine 5'-triphosphate nucleotidohydrolase of Heliobacterium modesticaldum (strain ATCC 51547 / Ice1).